The sequence spans 1018 residues: Ubiquitin carboxyl-terminal hydrolase 35 (1018 aa).

Positions 441 to 926 (IGLINLGNTC…TAYVLFYRQR (486 aa)) constitute a USP domain. The Nucleophile role is filled by Cys450. Disordered stretches follow at residues 544–566 (QKLK…STSV) and 610–757 (RLGS…GSEG). A compositionally biased stretch (pro residues) spans 552–561 (PSPPEEPPAP). Ser613 is subject to Phosphoserine. 3 stretches are compositionally biased toward basic and acidic residues: residues 673 to 691 (QEER…TEKE), 699 to 709 (STRGEGEREKE), and 718 to 728 (KVEKETEKEAE). His862 acts as the Proton acceptor in catalysis. The segment at 984–1011 (HWGRGFDEDKDEDEGSPGGCNPAGGNGG) is disordered. A compositionally biased stretch (gly residues) spans 999–1011 (SPGGCNPAGGNGG).

The protein belongs to the peptidase C19 family. In terms of assembly, homodimer (via C-terminal region). Interacts with HSP90AA1. Ubiquitinated by CHIP/STUB1 in an HSP90-dependent manner; leading to proteasomal degradation. This ubiquitination can be reversed through auto-deubiquitinating activity. Expressed in testis, pancreas and skeletal muscle.

The protein localises to the cytoplasm. It is found in the mitochondrion. The catalysed reaction is Thiol-dependent hydrolysis of ester, thioester, amide, peptide and isopeptide bonds formed by the C-terminal Gly of ubiquitin (a 76-residue protein attached to proteins as an intracellular targeting signal).. Functionally, deubiquitinase that plays a role in different processes including cell cycle regulation, mitophagy or endoplasmic reticulum stress. Inhibits TNFalpha-induced NF-kappa-B activation through stabilizing TNIP2 protein via deubiquitination. Plays an essential role during mitosis by deubiquitinating and thereby regulating the levels of Aurora B/AURKB protein. In addition, regulates the protein levels of other key component of the chromosomal passenger complex (CPC) such as survivin/BIRC5 or Borealin/CDCA8 by enhancing their stability. Regulates the degradation of mitochondria through the process of autophagy termed mitophagy. This chain is Ubiquitin carboxyl-terminal hydrolase 35 (USP35), found in Homo sapiens (Human).